Here is a 506-residue protein sequence, read N- to C-terminus: ATP-dependent rRNA helicase RRP3 (506 aa).

Disordered stretches follow at residues 1-22 (MSGK…KSKE) and 37-88 (NQKK…FESF). Acidic residues predominate over residues 49–69 (SDQEDDPSESEEEEGSDSEDV). Residues 86 to 114 (ESFSDLDLVPELIEACKNLNFAKPTPIQA) carry the Q motif motif. The region spanning 117–289 (IPPALQGHDI…RASLTNPVKC (173 aa)) is the Helicase ATP-binding domain. 130-137 (AQTGSGKT) contacts ATP. The short motif at 236–239 (DEAD) is the DEAD box element. The 149-residue stretch at 312 to 460 (LKNTYLIYLM…KENVNKDAIL (149 aa)) folds into the Helicase C-terminal domain. A disordered region spans residues 485–506 (IARGKGRRGRMAARDDMDKGER). The span at 496-506 (AARDDMDKGER) shows a compositional bias: basic and acidic residues.

Belongs to the DEAD box helicase family. DDX47/RRP3 subfamily. Interacts with the SSU processome.

It is found in the nucleus. It catalyses the reaction ATP + H2O = ADP + phosphate + H(+). Its function is as follows. ATP-dependent rRNA helicase required for pre-ribosomal RNA processing. Involved in the maturation of the 35S-pre-rRNA and to its cleavage to mature 18S rRNA. In Vanderwaltozyma polyspora (strain ATCC 22028 / DSM 70294 / BCRC 21397 / CBS 2163 / NBRC 10782 / NRRL Y-8283 / UCD 57-17) (Kluyveromyces polysporus), this protein is ATP-dependent rRNA helicase RRP3.